The chain runs to 421 residues: F-box only protein 9 (421 aa).

The interval 1-63 (MAESNQNTDG…AELRRRQETA (63 aa)) is disordered. A compositionally biased stretch (acidic residues) spans 11 to 20 (AVEEGEDENT). Residues 40 to 52 (LQPSSGGQRSFSR) show a composition bias toward polar residues. The segment covering 54-63 (AELRRRQETA) has biased composition (basic and acidic residues). Residues 68–101 (ARELFLKAVEEEQNGAVYEAIKYYKSAMQLVPDI) form a TPR repeat. Residues 158-209 (QVHISALPFEVLMYIFRWVVSCDLDLRALEQLSLVCRGFYICARDPEIWRSA) form the F-box domain.

Part of the SCF (SKP1-CUL1-F-box) E3 ubiquitin-protein ligase complex SCF(fbxo9).

The protein resides in the cytoplasm. It functions in the pathway protein modification; protein ubiquitination. Substrate recognition component of a SCF (SKP1-CUL1-F-box protein) E3 ubiquitin-protein ligase complex which mediates the ubiquitination and subsequent proteasomal degradation of target proteins and acts as a regulator of mTOR signaling. The protein is F-box only protein 9 (fbxo9) of Danio rerio (Zebrafish).